Reading from the N-terminus, the 275-residue chain is MWGSGELLVAWFLVLAADGTTEHVYRPSRRVCTVGISGGSISETFVQRVYQPYLTTCDGHRACSTYRTIYRTAYRRSPGVTPARPRYACCPGWKRTSGLPGACGAAICQPPCGNGGSCIRPGHCRCPVGWQGDTCQTDVDECSTGEASCPQRCVNTVGSYWCQGWEGQSPSADGTRCLSKEGPSPVAPNPTAGVDSMAREEVYRLQARVDVLEQKLQLVLAPLHSLASRSTEHGLQDPGSLLAHSFQQLDRIDSLSEQVSFLEEHLGSCSCKKDL.

Positions 1-21 (MWGSGELLVAWFLVLAADGTT) are cleaved as a signal peptide. The EMI domain occupies 28 to 105 (SRRVCTVGIS…TSGLPGACGA (78 aa)). 8 disulfide bridges follow: cysteine 32/cysteine 90, cysteine 57/cysteine 63, cysteine 89/cysteine 103, cysteine 108/cysteine 118, cysteine 112/cysteine 124, cysteine 126/cysteine 135, cysteine 142/cysteine 153, and cysteine 149/cysteine 162. The EGF-like 1 domain maps to 104–136 (GAAICQPPCGNGGSCIRPGHCRCPVGWQGDTCQ). The Cell attachment site signature appears at 131–133 (QGD). The region spanning 138-178 (DVDECSTGEASCPQRCVNTVGSYWCQGWEGQSPSADGTRCL) is the EGF-like 2; calcium-binding domain. A disordered region spans residues 173–193 (DGTRCLSKEGPSPVAPNPTAG). The stretch at 196 to 220 (SMAREEVYRLQARVDVLEQKLQLVL) forms a coiled coil.

As to quaternary structure, interacts with ITGAV/ITGB3 in an RGD-dependent manner, increasing endothelial cell's motility. As to expression, expressed specifically by endothelial cells of the highly vascularized organs heart, lung and kidney.

The protein resides in the secreted. The protein localises to the extracellular space. Its function is as follows. Regulates vascular tubulogenesis in vivo. Inhibits platelet-derived growth factor (PDGF)-BB-induced smooth muscle cell migration and promotes endothelial cell adhesion to the extracellular matrix and angiogenesis. The protein is Epidermal growth factor-like protein 7 (Egfl7) of Mus musculus (Mouse).